The chain runs to 271 residues: MASTANPMQVMKKKLEGKVVIVTGGASGIGQTAARVFAQHGARAVVIADIQSEVGKSVAKSIGDPCCYVQCDVSDEEEVKSMIEWTASAYGGLDMMFSNVGIMSKSAQTVMDLDLLEFDKVMRVNARGMAACLKHAARKMVELGTRGTIICTTTPLSSRGGQSMTDYAMSKHAVMGLVRSASIQLGAHGIRVNCVTPSVVLTPLAQRMGLATPDDFHTHFGNFTSLKGVYLTPEQVAEAVVYLASDDAAFITGHDLVLDGGLLCLPFFAPS.

Residues 24 to 30 (GGASGIG), 49 to 51 (DIQ), 72 to 73 (DV), and asparagine 99 contribute to the NAD(+) site. Substrate contacts are provided by threonine 154 and tyrosine 167. NAD(+) contacts are provided by residues tyrosine 167, lysine 171, and 200 to 205 (VLTPLA). Tyrosine 167 acts as the Proton acceptor in catalysis.

This sequence belongs to the short-chain dehydrogenases/reductases (SDR) family.

The enzyme catalyses (S)-8-oxocitronellyl enol = cis-trans-nepetalactol. The catalysed reaction is cis-cis-nepetalactol + NAD(+) = cis-cis-nepetalactone + NADH + H(+). It catalyses the reaction cis-trans-nepetalactol + NAD(+) = cis-trans-nepetalactone + NADH + H(+). Its function is as follows. Bifunctional enzyme that possesses cyclase and dehydrogenase activities. Functions as a non-oxidoreductive cyclase to promote the formation of cis-trans-nepetalactol. Functions as dehydrogenase to oxidize cis-cis-nepetalactol and cis-trans-nepetalactol into nepetalactones, metabolites that are both insect-repellent and have euphoric effect in cats. Binds NAD(+) as classical short-chain dehydrogenase/reductase (SDR), but does not utilize it for its redox-neutral cyclase activity. In Nepeta racemosa (Catmint), this protein is (+)-cis,trans-nepetalactol synthase NEPS1.